A 595-amino-acid chain; its full sequence is Chaperone protein HscA homolog (595 aa).

It belongs to the heat shock protein 70 family.

Chaperone involved in the maturation of iron-sulfur cluster-containing proteins. Has a low intrinsic ATPase activity which is markedly stimulated by HscB. This Rickettsia conorii (strain ATCC VR-613 / Malish 7) protein is Chaperone protein HscA homolog.